A 71-amino-acid polypeptide reads, in one-letter code: Potassium voltage-gated channel subfamily E member 2 (71 aa).

A helical membrane pass occupies residues 7 to 27 (VILYLMVMIGMFSFIIVAILV). The Cytoplasmic portion of the chain corresponds to 28–71 (STVKSKRREHSNDPYHQYIVEDWQEKYKSQILHFEEAKATIHEN).

Belongs to the potassium channel KCNE family. In terms of assembly, interacts with KCNB1. Associates with KCNH2/ERG1. May associate with KCNQ2 and KCNQ3. Associates with HCN1 and probably HCN2. Heteromultimer with KCNC2. Interacts with KCNC2. Interacts with KCNQ1; forms a heterooligomer complex that targets to the membrane raft and leading to currents with an apparently instantaneous activation, a rapid deactivation process and a linear current-voltage relationship and decreases the amplitude of the outward current. Detected in heart; expression is highest in the SA node and the right atrium, and barely detectable in the ventricle.

Its subcellular location is the cell membrane. The protein resides in the apical cell membrane. Its function is as follows. Ancillary protein that functions as a regulatory subunit of the voltage-gated potassium (Kv) channel complex composed of pore-forming and potassium-conducting alpha subunits and of regulatory beta subunits. KCNE2 beta subunit modulates the gating kinetics and enhances stability of the channel complex. Alters the gating of the delayed rectifier Kv channel containing KCNB1 alpha subunit. Associates with KCNH2/HERG alpha subunit Kv channel to form the rapidly activating component of the delayed rectifying potassium current (IKr) in heart. May associate with KCNQ2 and/or KCNQ3 alpha subunits to modulate the native M-type current. May associate with HCN1 and HCN2 channel subunits to increase potassium current. Forms a heterooligomer complex with KCNQ1/KVLQT1 alpha subunits which leads to currents with an apparently instantaneous activation, a rapid deactivation process and a linear current-voltage relationship and decreases the amplitude of the outward current. KCNQ1-KCNE2 channel associates with Na(+)-coupled myo-inositol symporter in the apical membrane of choroid plexus epithelium and regulates the myo-inositol gradient between blood and cerebrospinal fluid with an impact on neuron excitability. This chain is Potassium voltage-gated channel subfamily E member 2 (KCNE2), found in Oryctolagus cuniculus (Rabbit).